Reading from the N-terminus, the 241-residue chain is Small ribosomal subunit protein uS2 (241 aa).

This sequence belongs to the universal ribosomal protein uS2 family.

This Shigella flexneri serotype 5b (strain 8401) protein is Small ribosomal subunit protein uS2.